Consider the following 365-residue polypeptide: Phosphoserine aminotransferase (365 aa).

Arginine 40 contributes to the L-glutamate binding site. Pyridoxal 5'-phosphate contacts are provided by residues 74-75, phenylalanine 99, threonine 155, aspartate 177, and glutamine 200; that span reads AS. Position 201 is an N6-(pyridoxal phosphate)lysine (lysine 201). Pyridoxal 5'-phosphate is bound at residue 241-242; the sequence is NT.

It belongs to the class-V pyridoxal-phosphate-dependent aminotransferase family. SerC subfamily. In terms of assembly, homodimer. Pyridoxal 5'-phosphate serves as cofactor.

The protein localises to the cytoplasm. It catalyses the reaction O-phospho-L-serine + 2-oxoglutarate = 3-phosphooxypyruvate + L-glutamate. It carries out the reaction 4-(phosphooxy)-L-threonine + 2-oxoglutarate = (R)-3-hydroxy-2-oxo-4-phosphooxybutanoate + L-glutamate. Its pathway is amino-acid biosynthesis; L-serine biosynthesis; L-serine from 3-phospho-D-glycerate: step 2/3. Catalyzes the reversible conversion of 3-phosphohydroxypyruvate to phosphoserine and of 3-hydroxy-2-oxo-4-phosphonooxybutanoate to phosphohydroxythreonine. The sequence is that of Phosphoserine aminotransferase from Lactococcus lactis subsp. cremoris (strain SK11).